The primary structure comprises 469 residues: Coumaroyl-CoA:anthocyanidin 3-O-glucoside-6''-O-coumaroyltransferase 1 (469 aa).

At methionine 1 the chain carries N-acetylmethionine. Residues histidine 173 and aspartate 410 each act as proton acceptor in the active site.

The protein belongs to the plant acyltransferase family. Highly expressed in flowers, leaves and roots. Lower levels of expression in stems and siliques.

Involved in the acylation of the 6'' position of the 3-O-glucose residue of anthocyanin. Also able to use flavonol 3-glucosides as the acyl acceptor. This is Coumaroyl-CoA:anthocyanidin 3-O-glucoside-6''-O-coumaroyltransferase 1 (3AT1) from Arabidopsis thaliana (Mouse-ear cress).